A 1074-amino-acid chain; its full sequence is ADAMTS-like protein 4 (1074 aa).

The first 24 residues, 1 to 24 (MENWTGRPWLYLLLLLSLPQLCLD), serve as a signal peptide directing secretion. In terms of domain architecture, TSP type-1 1 spans 48–93 (GPWVQWASCSQPCGVGVQRRSRTCQLPTVQLHPSLPLPPRPPRHPE). The tract at residues 77 to 342 (QLHPSLPLPP…QHPGAWLPLL (266 aa)) is disordered. A compositionally biased stretch (polar residues) spans 103–119 (RPQTSPETLPLYRTQSR). Residues 132-152 (LGREETQEIRAARRSRLRDPI) show a composition bias toward basic and acidic residues. Positions 206 to 226 (ANGSPQTELPPTELSVHTPSP) are enriched in polar residues. Residues 310-323 (GQQGQGPWGTGGTP) show a composition bias toward gly residues. N490 is a glycosylation site (N-linked (GlcNAc...) (complex) asparagine). 5 consecutive TSP type-1 domains span residues 723–782 (CPPY…QLRL), 783–842 (CGHW…GPCT), 845–909 (WFHS…GPCE), 910–969 (RTWR…QGQA), and 970–1026 (CQDR…QPCS). N-linked (GlcNAc...) asparagine glycosylation occurs at N773. One can recognise a PLAC domain in the interval 1029 to 1066 (PDDQCKDSSPHCPLVVQARLCVYPYYTATCCRSCAHVL).

As to quaternary structure, interacts with CTSB. Interacts with FBN1. Post-translationally, N-glycosylated. Can be O-fucosylated by POFUT2 on a serine or a threonine residue found within the consensus sequence C1-X(2)-(S/T)-C2-G of the TSP type-1 repeat domains where C1 and C2 are the first and second cysteine residue of the repeat, respectively. Fucosylated repeats can then be further glycosylated by the addition of a beta-1,3-glucose residue by the glucosyltransferase, B3GALTL. Fucosylation mediates the efficient secretion of ADAMTS family members. Can also be C-glycosylated with one or two mannose molecules on tryptophan residues within the consensus sequence W-X-X-W of the TPRs. N- and C-glycosylations can also facilitate secretion. In terms of tissue distribution, expressed in colon, heart, leukocyte, liver, lung, skeletal muscle, spleen, testis and placenta. Weaker expression in bone marrow, brain tissue, kidney and pancreas. Expression studies in fetal tissues reveal strong expression in heart, kidney, liver, lung and skeletal muscle, but weaker expression in fetal brain and skin.

It localises to the secreted. The protein localises to the extracellular space. Its subcellular location is the extracellular matrix. Its function is as follows. Positive regulation of apoptosis. May facilitate FBN1 microfibril biogenesis. The chain is ADAMTS-like protein 4 (ADAMTSL4) from Homo sapiens (Human).